A 917-amino-acid chain; its full sequence is Alanine--tRNA ligase (917 aa).

The Zn(2+) site is built by His592, His596, Cys694, and His698.

It belongs to the class-II aminoacyl-tRNA synthetase family. Zn(2+) serves as cofactor.

It localises to the cytoplasm. It carries out the reaction tRNA(Ala) + L-alanine + ATP = L-alanyl-tRNA(Ala) + AMP + diphosphate. In terms of biological role, catalyzes the attachment of alanine to tRNA(Ala) in a two-step reaction: alanine is first activated by ATP to form Ala-AMP and then transferred to the acceptor end of tRNA(Ala). Also edits incorrectly charged Ser-tRNA(Ala) and Gly-tRNA(Ala) via its editing domain. The sequence is that of Alanine--tRNA ligase from Sorangium cellulosum (strain So ce56) (Polyangium cellulosum (strain So ce56)).